Consider the following 136-residue polypeptide: Large ribosomal subunit protein bL19 (136 aa).

The disordered stretch occupies residues 1 to 23 (MEETVNNQETPETSEEETADEET). Positions 12–23 (ETSEEETADEET) are enriched in acidic residues.

This sequence belongs to the bacterial ribosomal protein bL19 family.

Its function is as follows. This protein is located at the 30S-50S ribosomal subunit interface and may play a role in the structure and function of the aminoacyl-tRNA binding site. This chain is Large ribosomal subunit protein bL19, found in Dehalococcoides mccartyi (strain ATCC BAA-2266 / KCTC 15142 / 195) (Dehalococcoides ethenogenes (strain 195)).